The chain runs to 131 residues: MWNEFKKFAIRGNVIDLAVGVIIGGAFGKIVSSLVNDIIMPLVGLLLGGIDFSNLSWKVGKAVVKYGAFIQTVVDFLIIAFSIFLFVKLINKLYERVKKQEEMEETEPTLTKEEELLTEIRDLLKQQRETM.

3 consecutive transmembrane segments (helical) span residues 8-28 (FAIR…GAFG), 30-50 (IVSS…LGGI), and 67-87 (GAFI…FLFV).

This sequence belongs to the MscL family. Homopentamer.

It is found in the cell membrane. Functionally, channel that opens in response to stretch forces in the membrane lipid bilayer. May participate in the regulation of osmotic pressure changes within the cell. In Geobacillus thermodenitrificans (strain NG80-2), this protein is Large-conductance mechanosensitive channel.